Reading from the N-terminus, the 1068-residue chain is tRNA wybutosine-synthesizing protein 4 (1068 aa).

A disordered region spans residues 1–31 (MCPPEQPAKAMAPSKSNQAAKSAVPTKEEKS). Residues Arg81, Gly107, Asp134, 181–182 (DL), and Glu208 contribute to the S-adenosyl-L-methionine site. Positions 876 to 1024 (ADFPSLSSDF…ALGRDVYGNR (149 aa)) constitute a JmjC domain.

This sequence belongs to the methyltransferase superfamily. LCMT family.

It carries out the reaction 7-[(3S)-3-amino-3-carboxypropyl]wyosine(37) in tRNA(Phe) + S-adenosyl-L-methionine = 7-[(3S)-(3-amino-3-methoxycarbonyl)propyl]wyosine(37) in tRNA(Phe) + S-adenosyl-L-homocysteine. The enzyme catalyses 7-[(3S)-(3-amino-3-methoxycarbonyl)propyl]wyosine(37) in tRNA(Phe) + S-adenosyl-L-methionine + CO2 = wybutosine(37) in tRNA(Phe) + S-adenosyl-L-homocysteine + 2 H(+). It functions in the pathway tRNA modification; wybutosine-tRNA(Phe) biosynthesis. Probable S-adenosyl-L-methionine-dependent methyltransferase that acts as a component of the wybutosine biosynthesis pathway. Wybutosine is a hyper modified guanosine with a tricyclic base found at the 3'-position adjacent to the anticodon of eukaryotic phenylalanine tRNA. May methylate the carboxyl group of leucine residues to form alpha-leucine ester residues. This is tRNA wybutosine-synthesizing protein 4 (ppm2) from Emericella nidulans (strain FGSC A4 / ATCC 38163 / CBS 112.46 / NRRL 194 / M139) (Aspergillus nidulans).